Consider the following 474-residue polypeptide: Probable periplasmic serine endoprotease DegP-like (474 aa).

Positions 1 to 25 (MRNLKSVTPLLMAALLWGQSLLAQA) are cleaved as a signal peptide. Residues His113, Asp143, and Ser216 each act as charge relay system in the active site. Residues 214–216 (GNS) and 271–275 (LGVVI) contribute to the substrate site. PDZ domains follow at residues 260-351 (LKAD…VRDG) and 357-463 (KVTI…LRQG).

It belongs to the peptidase S1C family.

It is found in the periplasm. The enzyme catalyses Acts on substrates that are at least partially unfolded. The cleavage site P1 residue is normally between a pair of hydrophobic residues, such as Val-|-Val.. In terms of biological role, might be efficient in the degradation of transiently denatured and unfolded proteins which accumulate in the periplasm following stress conditions. In Ectopseudomonas mendocina (strain ymp) (Pseudomonas mendocina), this protein is Probable periplasmic serine endoprotease DegP-like.